We begin with the raw amino-acid sequence, 419 residues long: Potassium/proton antiporter CemA (419 aa).

Helical transmembrane passes span L196–F216, I297–A317, I344–I364, and F371–L391.

The protein belongs to the CemA family.

It is found in the plastid. Its subcellular location is the chloroplast inner membrane. The catalysed reaction is K(+)(in) + H(+)(out) = K(+)(out) + H(+)(in). Its function is as follows. Contributes to K(+)/H(+) antiport activity by supporting proton efflux to control proton extrusion and homeostasis in chloroplasts in a light-dependent manner to modulate photosynthesis. Prevents excessive induction of non-photochemical quenching (NPQ) under continuous-light conditions. Indirectly promotes efficient inorganic carbon uptake into chloroplasts. The chain is Potassium/proton antiporter CemA from Chara vulgaris (Common stonewort).